We begin with the raw amino-acid sequence, 447 residues long: Putative vacuolar cation/proton exchanger 4 (447 aa).

The disordered stretch occupies residues 1–29 (MDKSEMDKINGTNPESTDQAPSLASRPDE). Over 1–65 (MDKSEMDKIN…VNWGVFGSMK (65 aa)) the chain is Cytoplasmic. Residues 10 to 22 (NGTNPESTDQAPS) are compositionally biased toward polar residues. The chain crosses the membrane as a helical span at residues 66-86 (IVFLKSKLNVLIPCGFLAIFL). At 87 to 93 (NYMTQRY) the chain is on the extracellular side. The chain crosses the membrane as a helical span at residues 94-114 (GWVFPLSMLGIIPLAERLGFA). At 115–122 (TDWQISCE) the chain is on the cytoplasmic side. Residues 123-143 (VGRLLNSAFGNATELIISIHA) traverse the membrane as a helical segment. The tract at residues 132–167 (GNATELIISIHALSRGKLHVVQQCLLGSILSNLLLV) is cation selection. Residues 144–159 (LSRGKLHVVQQCLLGS) lie on the Extracellular side of the membrane. The chain crosses the membrane as a helical span at residues 160–180 (ILSNLLLVLGSAFFSGGLACG). Residues 181–190 (KTMQTFSKAD) lie on the Cytoplasmic side of the membrane. A helical transmembrane segment spans residues 191–211 (AVVNSGLLLMAVMGLLIPAAL). Residues 212 to 224 (HYTHSEAQFGKSE) are Extracellular-facing. A helical membrane pass occupies residues 225 to 245 (LALSRFSSCIMLVAYASYLYF). At 246–286 (QLSNNRRRNEANVYPCMPLIKRRIQDDVDGNDDEVPEISKR) the chain is on the cytoplasmic side. Residues 287-307 (EAISWIAIFIAWISMLSYYLV) form a helical membrane-spanning segment. At 308–318 (DAIDGASKAWN) the chain is on the extracellular side. A helical membrane pass occupies residues 319–339 (IPVAFISVVLLPVVGNSAGHA). The tract at residues 333–368 (GNSAGHANAVMFAVKDKLDISLGVAIGSSIQISMFG) is cation selection. Topologically, residues 340–353 (NAVMFAVKDKLDIS) are cytoplasmic. Residues 354 to 374 (LGVAIGSSIQISMFGIPFCVV) form a helical membrane-spanning segment. The Extracellular segment spans residues 375 to 384 (MGWMMGKPMD). Residues 385 to 405 (LNFHLFETASLLTTVLVVAFL) traverse the membrane as a helical segment. Residues 406 to 413 (LQDGTSNC) are Cytoplasmic-facing. Residues 414-434 (VKGLMLFLCYLIVAASFYVHA) traverse the membrane as a helical segment. Residues 435–447 (DPNSKASEKPPQN) lie on the Extracellular side of the membrane.

The protein belongs to the Ca(2+):cation antiporter (CaCA) (TC 2.A.19) family. Cation/proton exchanger (CAX) subfamily.

The protein resides in the vacuole membrane. Vacuolar cation/proton exchanger (CAX). Translocates Ca(2+) and other metal ions into vacuoles using the proton gradient formed by H(+)-ATPase and H(+)-pyrophosphatase. The chain is Putative vacuolar cation/proton exchanger 4 from Oryza sativa subsp. japonica (Rice).